The chain runs to 360 residues: Mannose-1-phosphate guanylyltransferase catalytic subunit beta (360 aa).

The tract at residues 2-222 is substrate-binding domain; the sequence is KALILVGGYG…QGFWMDIGQP (221 aa). Aspartate 110 is a binding site for GDP-alpha-D-mannose. Aspartate 110 is a binding site for Mg(2+). The active site involves lysine 162. Aspartate 218 provides a ligand contact to GDP-alpha-D-mannose. Residue aspartate 218 coordinates Mg(2+). The hexapeptide repeat domain stretch occupies residues 245-360; that stretch reads CSGPGIVGNV…ESVPEPRIIM (116 aa).

It belongs to the transferase hexapeptide repeat family. As to quaternary structure, component of the GMPPA-GMPPB mannose-1-phosphate guanylyltransferase complex composed of 4 GMPPA subunits and 8 GMPPB subunits; the complex is organized into three layers, a central layer made up of 2 GMPPA dimers sandwiched between two layers each made up of 2 GMPPB dimers. GMPPB catalytic activity is reduced when part of the complex and binding of GDP-alpha-D-Mannose by GMPPA induces allosteric feedback inhibition of GMPPB. Requires Mg(2+) as cofactor. In terms of tissue distribution, ubiquitously expressed, including in brain and skeletal muscle. Weakly expressed with highest expression in skeletal muscle, brain and gonads.

Its subcellular location is the cytoplasm. The catalysed reaction is alpha-D-mannose 1-phosphate + GTP + H(+) = GDP-alpha-D-mannose + diphosphate. Its pathway is nucleotide-sugar biosynthesis; GDP-alpha-D-mannose biosynthesis; GDP-alpha-D-mannose from alpha-D-mannose 1-phosphate (GTP route): step 1/1. With respect to regulation, enzyme activity is reduced by incorporation into the GMPPA-GMPPB mannose-1-phosphate guanylyltransferase complex. Allosterically inhibited, when part of the GMPPA-GMPPB complex, by GDP-alpha-D-mannose binding to GMPPA. Its function is as follows. Catalytic subunit of the GMPPA-GMPPB mannose-1-phosphate guanylyltransferase complex. Catalyzes the formation of GDP-mannose, an essential precursor of glycan moieties of glycoproteins and glycolipids. Can catalyze the reverse reaction in vitro. Together with GMPPA regulates GDP-alpha-D-mannose levels. The polypeptide is Mannose-1-phosphate guanylyltransferase catalytic subunit beta (Homo sapiens (Human)).